We begin with the raw amino-acid sequence, 958 residues long: MTSPFLQRHLGPSETEQHQMLQTLGYQHLDDFIKDVVPDDILDAAPPRNVLPAGCGEAEALADLGTIAAKNLVQRSLIGLGYHGTATPALIQRHVFENPAWYTAYTPYQAEIAQGRLEALLNFQTLISELTGLPIANASLLDEATAAAEAMGLSFGVCRRPEANRFLVDCHVLPQTWAVLQTRAEPLGIELERVDPEQMAFDTRVFGVLLQLPGADGLLWDPTTLIERAHDAGALVTVAIDPLAQTLFAPVADFGADIAVGSAQRFGVPMGFGGPHAAFFATREAYKRQIPGRLVGESKDAEGNPALRLALQTREQHIRRDKATSNICTAQVLLAVIASFYAVHHGPDGLRAIAERLVGLRLQFEAGLRTLDVAVEEADRFDTVTVTTTHAPAVHAAAAEAGFNLRVLPDGVPASQATGFGVSFDEFSDQKEVAHLLEAVARAVGKPVSTAPASAANTALLSLPSRIRPWLTQPAFHRYRSETELMRYIQRLVSRDLSLVHGMIPLGSCTMKLNAAAELLPVSWPEFARLHPFAPLDQALGYRHLADDLERWLAALTGFAAVSLQPNAGSQGEYAGLLVIRAWHRSRGDNHRDICLIPTSAHGTNPASAVMAGLKVVAVACDAEGNIDQDDLAARATEYADRLAALMVTYPSTHGVFETGIRHICEVVHRHGGQVYLDGANLNAQVGLSRPGAFGADVCHLNLHKTFCIPHGGGGPGVGPIGVAAHLAPFLPGHPFENQTASAIGPVSAAALGSASILPISWMYLRMMGADALRQASAVALLSANYLAHRLDDHFPVLFRGATGRVAHECILDLRPLKRDAGIDVDDIAKRLMDYGFHAPTVSWPVAGTVMVEPTESESLSELDRFADALIAIRDEVRAIETGAMDALNNPLKRAPHTMAAVMAEVWDRPYSRQQAAFPLPDQTQNKVWPAVARIDNAFGDRNLICTCPSVEAVAIAA.

Lys-705 is modified (N6-(pyridoxal phosphate)lysine).

The protein belongs to the GcvP family. In terms of assembly, the glycine cleavage system is composed of four proteins: P, T, L and H. Requires pyridoxal 5'-phosphate as cofactor.

It catalyses the reaction N(6)-[(R)-lipoyl]-L-lysyl-[glycine-cleavage complex H protein] + glycine + H(+) = N(6)-[(R)-S(8)-aminomethyldihydrolipoyl]-L-lysyl-[glycine-cleavage complex H protein] + CO2. In terms of biological role, the glycine cleavage system catalyzes the degradation of glycine. The P protein binds the alpha-amino group of glycine through its pyridoxal phosphate cofactor; CO(2) is released and the remaining methylamine moiety is then transferred to the lipoamide cofactor of the H protein. In Synechococcus sp. (strain CC9902), this protein is Glycine dehydrogenase (decarboxylating).